The following is a 445-amino-acid chain: Trigger factor (445 aa).

The PPIase FKBP-type domain maps to 162–247 (GDQITMDAVG…VKAVHTAEPT (86 aa)).

Belongs to the FKBP-type PPIase family. Tig subfamily.

It localises to the cytoplasm. It carries out the reaction [protein]-peptidylproline (omega=180) = [protein]-peptidylproline (omega=0). Functionally, involved in protein export. Acts as a chaperone by maintaining the newly synthesized protein in an open conformation. Functions as a peptidyl-prolyl cis-trans isomerase. The sequence is that of Trigger factor from Rickettsia bellii (strain OSU 85-389).